The primary structure comprises 174 residues: Scytalone dehydratase-like protein Arp1 (174 aa).

Tyr-49 serves as a coordination point for substrate. Catalysis depends on residues His-84 and His-109. Asn-130 lines the substrate pocket.

The protein belongs to the scytalone dehydratase family. As to quaternary structure, homotrimer. Each subunit contains an active site, located in the central part of the hydrophobic core of the monomer, which functions independently.

In terms of biological role, scytalone dehydratase-like protein; part of the Pks2 gene cluster that mediates the formation of infectious structures (appressoria), enabling these fungi to kill insects faster. The product of the Pks2 gene cluster is different from the one of Pks1 and has still not been identified. This chain is Scytalone dehydratase-like protein Arp1, found in Metarhizium majus (strain ARSEF 297).